We begin with the raw amino-acid sequence, 239 residues long: Chlorate reductase subunit gamma (239 aa).

The N-terminal stretch at 1–27 is a signal peptide; sequence MKTNILVKRMAVIGLAVAAACTGAAAA. 2 residues coordinate heme b: His-74 and Met-138.

In terms of assembly, heterotrimer of alpha, beta and gamma subunits. Heme b is required as a cofactor.

It localises to the periplasm. May transfer electrons to the iron-sulfur centers of ClrB. This Ideonella dechloratans protein is Chlorate reductase subunit gamma (clrC).